The following is a 145-amino-acid chain: Small ribosomal subunit protein uS17c (145 aa).

The transit peptide at M1–A36 directs the protein to the chloroplast. The disordered stretch occupies residues K101–D145. Low complexity predominate over residues Q120–Q136.

Belongs to the universal ribosomal protein uS17 family. Part of the 30S ribosomal subunit.

It is found in the plastid. It localises to the chloroplast. Functionally, one of the primary rRNA binding proteins, it binds specifically to the 5'-end of 16S ribosomal RNA. The polypeptide is Small ribosomal subunit protein uS17c (RPS17) (Oryza sativa subsp. japonica (Rice)).